The following is a 586-amino-acid chain: SPbeta prophage-derived uncharacterized protein YorA (586 aa).

PbH1 repeat units follow at residues 108–147, 148–170, 184–206, 207–235, 246–268, 288–313, 320–341, 364–384, 387–410, 411–432, 435–456, 481–504, and 505–531; these read AENV…HVHG, SKNV…WIAA, SKSV…ATNG, CEGL…DLEG, PYEL…TAHT, STDV…DSVG, GNRI…MIRG, AEDV…QIQV, SSDI…KVMD, SNDV…YCER, AVRI…YWDK, MYNI…HLIG, and GSEH…YLNG.

The chain is SPbeta prophage-derived uncharacterized protein YorA (yorA) from Bacillus subtilis (strain 168).